The following is a 216-amino-acid chain: 3-keto-L-gulonate-6-phosphate decarboxylase UlaD (216 aa).

Asp-11 is a binding site for substrate. Residues Glu-33 and Asp-62 each coordinate Mg(2+). Arg-192 is a substrate binding site.

It belongs to the HPS/KGPDC family. KGPDC subfamily. Homodimer. Requires Mg(2+) as cofactor.

It catalyses the reaction 3-dehydro-L-gulonate 6-phosphate + H(+) = L-xylulose 5-phosphate + CO2. It participates in cofactor degradation; L-ascorbate degradation; D-xylulose 5-phosphate from L-ascorbate: step 2/4. Catalyzes the decarboxylation of 3-keto-L-gulonate-6-P into L-xylulose-5-P. Is involved in the anaerobic L-ascorbate utilization. This is 3-keto-L-gulonate-6-phosphate decarboxylase UlaD from Escherichia coli O139:H28 (strain E24377A / ETEC).